Reading from the N-terminus, the 337-residue chain is NADH-quinone oxidoreductase subunit H (337 aa).

Transmembrane regions (helical) follow at residues 13–33 (IIIVLQCLAIILPMLGAIAYL), 82–102 (AVFIIAPLMTFILALIAWAVI), 115–135 (VGVLYLFAVSGLGVYGIIMAG), 154–174 (MVSYEVAMGLIIIAVILSAGS), 187–207 (GVWYFIPHFPMFVMFLVSILA), 248–268 (ILMSGITAILFLGGWLPPVDI), 274–294 (IPGIIWFFLKIALILFVFLWV), and 313–333 (VFLPGSLIWVVLTAGFLVTFD).

This sequence belongs to the complex I subunit 1 family. In terms of assembly, NDH-1 is composed of 14 different subunits. Subunits NuoA, H, J, K, L, M, N constitute the membrane sector of the complex.

The protein resides in the cell inner membrane. The enzyme catalyses a quinone + NADH + 5 H(+)(in) = a quinol + NAD(+) + 4 H(+)(out). NDH-1 shuttles electrons from NADH, via FMN and iron-sulfur (Fe-S) centers, to quinones in the respiratory chain. The immediate electron acceptor for the enzyme in this species is believed to be ubiquinone. Couples the redox reaction to proton translocation (for every two electrons transferred, four hydrogen ions are translocated across the cytoplasmic membrane), and thus conserves the redox energy in a proton gradient. This subunit may bind ubiquinone. The polypeptide is NADH-quinone oxidoreductase subunit H (Rhodospirillum rubrum (strain ATCC 11170 / ATH 1.1.1 / DSM 467 / LMG 4362 / NCIMB 8255 / S1)).